A 423-amino-acid chain; its full sequence is UDP-N-acetylglucosamine 1-carboxyvinyltransferase (423 aa).

21 to 22 (KN) contributes to the phosphoenolpyruvate binding site. A UDP-N-acetyl-alpha-D-glucosamine-binding site is contributed by arginine 92. The active-site Proton donor is cysteine 116. Cysteine 116 bears the 2-(S-cysteinyl)pyruvic acid O-phosphothioketal mark. Residues aspartate 305 and valine 327 each coordinate UDP-N-acetyl-alpha-D-glucosamine.

It belongs to the EPSP synthase family. MurA subfamily.

The protein localises to the cytoplasm. The catalysed reaction is phosphoenolpyruvate + UDP-N-acetyl-alpha-D-glucosamine = UDP-N-acetyl-3-O-(1-carboxyvinyl)-alpha-D-glucosamine + phosphate. It participates in cell wall biogenesis; peptidoglycan biosynthesis. In terms of biological role, cell wall formation. Adds enolpyruvyl to UDP-N-acetylglucosamine. This is UDP-N-acetylglucosamine 1-carboxyvinyltransferase from Fervidobacterium nodosum (strain ATCC 35602 / DSM 5306 / Rt17-B1).